The following is a 122-amino-acid chain: Large ribosomal subunit protein uL14 (122 aa).

It belongs to the universal ribosomal protein uL14 family. Part of the 50S ribosomal subunit. Forms a cluster with proteins L3 and L19. In the 70S ribosome, L14 and L19 interact and together make contacts with the 16S rRNA in bridges B5 and B8.

Functionally, binds to 23S rRNA. Forms part of two intersubunit bridges in the 70S ribosome. This is Large ribosomal subunit protein uL14 from Streptococcus pyogenes serotype M2 (strain MGAS10270).